The following is a 64-amino-acid chain: Bowman-Birk type trypsin inhibitor TI1 (64 aa).

5 disulfides stabilise this stretch: Cys-9-Cys-61, Cys-10-Cys-25, Cys-15-Cys-23, Cys-32-Cys-39, and Cys-36-Cys-49.

It belongs to the Bowman-Birk serine protease inhibitor family.

This is Bowman-Birk type trypsin inhibitor TI1 from Coix lacryma-jobi (Job's tears).